We begin with the raw amino-acid sequence, 672 residues long: tRNA 5-methylaminomethyl-2-thiouridine biosynthesis bifunctional protein MnmC (672 aa).

A tRNA (mnm(5)s(2)U34)-methyltransferase region spans residues 1–241 (MLKVTTAHIH…KRECLQGFKP (241 aa)). The segment at 271-672 (IGGGISSLFS…RKLLKGTPVK (402 aa)) is FAD-dependent cmnm(5)s(2)U34 oxidoreductase.

In the N-terminal section; belongs to the methyltransferase superfamily. tRNA (mnm(5)s(2)U34)-methyltransferase family. It in the C-terminal section; belongs to the DAO family. Requires FAD as cofactor.

The protein resides in the cytoplasm. The catalysed reaction is 5-aminomethyl-2-thiouridine(34) in tRNA + S-adenosyl-L-methionine = 5-methylaminomethyl-2-thiouridine(34) in tRNA + S-adenosyl-L-homocysteine + H(+). In terms of biological role, catalyzes the last two steps in the biosynthesis of 5-methylaminomethyl-2-thiouridine (mnm(5)s(2)U) at the wobble position (U34) in tRNA. Catalyzes the FAD-dependent demodification of cmnm(5)s(2)U34 to nm(5)s(2)U34, followed by the transfer of a methyl group from S-adenosyl-L-methionine to nm(5)s(2)U34, to form mnm(5)s(2)U34. This Mannheimia succiniciproducens (strain KCTC 0769BP / MBEL55E) protein is tRNA 5-methylaminomethyl-2-thiouridine biosynthesis bifunctional protein MnmC.